The following is a 226-amino-acid chain: 2-C-methyl-D-erythritol 4-phosphate cytidylyltransferase (226 aa).

Belongs to the IspD/TarI cytidylyltransferase family. IspD subfamily.

It catalyses the reaction 2-C-methyl-D-erythritol 4-phosphate + CTP + H(+) = 4-CDP-2-C-methyl-D-erythritol + diphosphate. It functions in the pathway isoprenoid biosynthesis; isopentenyl diphosphate biosynthesis via DXP pathway; isopentenyl diphosphate from 1-deoxy-D-xylulose 5-phosphate: step 2/6. Its function is as follows. Catalyzes the formation of 4-diphosphocytidyl-2-C-methyl-D-erythritol from CTP and 2-C-methyl-D-erythritol 4-phosphate (MEP). This is 2-C-methyl-D-erythritol 4-phosphate cytidylyltransferase from Synechococcus sp. (strain CC9902).